The sequence spans 236 residues: MGQKTHPIGFRLGAIRGWDSNWYSETNFQDKLVEDEELRRYLHTRLKRAGLSRAVIERTPERVILTLHTSRPGVVIGRGGSEVEKLKGELETLTGKDIQINISEIKRPELDATLVAKNIVQQLEGRISFRRAMKQAMQAAMRMGAEGVRIRAAGRLGGAEMGRTEEYMEGRVPLHTIRADIDFAQETALTIYGTIGVKVWIHRGEILGKPDLSPNVQAQQRKMKESPQQRRQRRGG.

Residues Leu-38–Lys-106 form the KH type-2 domain. The segment at Asp-211–Gly-236 is disordered.

Belongs to the universal ribosomal protein uS3 family. In terms of assembly, part of the 30S ribosomal subunit. Forms a tight complex with proteins S10 and S14.

Binds the lower part of the 30S subunit head. Binds mRNA in the 70S ribosome, positioning it for translation. This Salinibacter ruber (strain DSM 13855 / M31) protein is Small ribosomal subunit protein uS3.